An 89-amino-acid polypeptide reads, in one-letter code: MKKTLLIAASLSFFSASALATPDCVTGKVEYTKYNDDDTFTVKVGDKELFTNRWNLQSLLLSAQITGMTVTIKTNACHNGGGFSEVIFR.

The N-terminal stretch at 1–20 is a signal peptide; sequence MKKTLLIAASLSFFSASALA. C24 and C77 are oxidised to a cystine.

This sequence belongs to the stxB family. Shiga toxin contains a single subunit A and five copies of subunit B.

Its function is as follows. The B subunit is responsible for the binding of the holotoxin to specific receptors on the target cell surface, such as globotriaosylceramide (Gb3) in human intestinal microvilli. The chain is Shiga toxin subunit B (stxB) from Shigella sonnei (Shigella sonnei bacteriophage 7888).